We begin with the raw amino-acid sequence, 639 residues long: Chaperone protein HtpG (639 aa).

Residues 1-348 (MAQYEFQTEV…SEDLPLNVSR (348 aa)) form an a; substrate-binding region. The tract at residues 349 to 565 (EILQQNRVLA…ENDPTVQMER (217 aa)) is b. Residues 566 to 639 (LMRATGQTHK…KRVNRLLARG (74 aa)) are c.

Belongs to the heat shock protein 90 family. In terms of assembly, homodimer.

It localises to the cytoplasm. Molecular chaperone. Has ATPase activity. This Treponema pallidum (strain Nichols) protein is Chaperone protein HtpG.